The primary structure comprises 128 residues: Small ribosomal subunit protein bS6 (128 aa).

This sequence belongs to the bacterial ribosomal protein bS6 family.

Functionally, binds together with bS18 to 16S ribosomal RNA. In Acinetobacter baylyi (strain ATCC 33305 / BD413 / ADP1), this protein is Small ribosomal subunit protein bS6.